Reading from the N-terminus, the 114-residue chain is UPF0102 protein HPAG1_0809 (114 aa).

Belongs to the UPF0102 family.

The sequence is that of UPF0102 protein HPAG1_0809 from Helicobacter pylori (strain HPAG1).